The primary structure comprises 450 residues: Phosphoglucosamine mutase (450 aa).

Catalysis depends on S102, which acts as the Phosphoserine intermediate. 4 residues coordinate Mg(2+): S102, D243, D245, and D247. The residue at position 102 (S102) is a Phosphoserine.

It belongs to the phosphohexose mutase family. It depends on Mg(2+) as a cofactor. In terms of processing, activated by phosphorylation.

It catalyses the reaction alpha-D-glucosamine 1-phosphate = D-glucosamine 6-phosphate. Catalyzes the conversion of glucosamine-6-phosphate to glucosamine-1-phosphate. This is Phosphoglucosamine mutase from Rhizobium leguminosarum bv. trifolii (strain WSM2304).